A 405-amino-acid polypeptide reads, in one-letter code: Putative colanic acid polymerase (405 aa).

A run of 11 helical transmembrane segments spans residues 5–25 (IRIC…VKIA), 27–47 (LGES…LLFL), 55–75 (LMIA…FGQS), 81–101 (YVTS…VWSI), 117–137 (FFYL…AQII), 171–191 (TALY…WLSI), 204–224 (MILA…FILF), 244–264 (PLAL…FPYI), 282–302 (IVGP…VVRF), 327–347 (GLYL…LWYM), and 376–396 (LFFT…CPFI).

The protein localises to the cell inner membrane. The protein operates within slime biogenesis; slime polysaccharide biosynthesis. The sequence is that of Putative colanic acid polymerase (wcaD) from Escherichia coli (strain K12).